The chain runs to 87 residues: Small ribosomal subunit protein uS17 (87 aa).

The protein belongs to the universal ribosomal protein uS17 family. As to quaternary structure, part of the 30S ribosomal subunit.

Functionally, one of the primary rRNA binding proteins, it binds specifically to the 5'-end of 16S ribosomal RNA. The protein is Small ribosomal subunit protein uS17 of Syntrophobacter fumaroxidans (strain DSM 10017 / MPOB).